The chain runs to 768 residues: Ral guanine nucleotide dissociation stimulator-like 1 (768 aa).

Residues 65 to 196 (KIRTIKAGTL…RAQNLLEQFQ (132 aa)) enclose the N-terminal Ras-GEF domain. Residues 232-501 (SEDLVAEQLT…YALSCEIEAA (270 aa)) form the Ras-GEF domain. Residue serine 520 is modified to Phosphoserine. The disordered stretch occupies residues 528–623 (MITSPTPTKE…PPSCNNNPKI (96 aa)). 3 stretches are compositionally biased toward low complexity: residues 541-561 (STAS…SCES), 586-596 (ESSSSCSSIHS), and 605-621 (SSLI…NNNP). Positions 648 to 735 (DTCIIRISVE…FDFILRKKNS (88 aa)) constitute a Ras-associating domain.

Interacts with Ras. In terms of tissue distribution, expressed in a wide variety of tissues with strong expression being seen in the heart, brain, kidney, spleen and testis.

Probable guanine nucleotide exchange factor. The sequence is that of Ral guanine nucleotide dissociation stimulator-like 1 (RGL1) from Homo sapiens (Human).